The chain runs to 900 residues: Alpha-actinin-3 (900 aa).

At Met-1 the chain carries N-acetylmethionine. Residues 1-26 form a disordered region; it reads MMMVMQPEGLGAGEGPFSGGGGGEYM. Positions 1–260 are actin-binding; the sequence is MMMVMQPEGL…IMTYVSCFYH (260 aa). Over residues 10–24 the composition is skewed to gly residues; sequence LGAGEGPFSGGGGGE. 2 Calponin-homology (CH) domains span residues 44–148 and 157–263; these read KQQR…LRFA and TSAK…HAFA. Spectrin repeat units follow at residues 287 to 397, 407 to 512, 522 to 633, and 643 to 746; these read KLME…WLLS, HLAE…ALER, QLQL…TLQE, and RLRR…EVEN. 2 EF-hand domains span residues 759 to 794 and 795 to 830; these read EQLN…MGYD and LGEV…ETAE. Residues Asp-772, Asn-776, Met-778, Asp-783, Asp-808, and Asn-810 each contribute to the Ca(2+) site.

It belongs to the alpha-actinin family. As to quaternary structure, homodimer; antiparallel. Also forms heterodimers with ACTN2. Interacts with MYOZ1. In terms of tissue distribution, expression restricted to skeletal muscle fast (type 2) fibers (at protein level).

In terms of biological role, F-actin cross-linking protein which is thought to anchor actin to a variety of intracellular structures. This is a bundling protein. This Mus musculus (Mouse) protein is Alpha-actinin-3 (Actn3).